An 84-amino-acid polypeptide reads, in one-letter code: Cell division topological specificity factor (84 aa).

It belongs to the MinE family.

Functionally, prevents the cell division inhibition by proteins MinC and MinD at internal division sites while permitting inhibition at polar sites. This ensures cell division at the proper site by restricting the formation of a division septum at the midpoint of the long axis of the cell. The polypeptide is Cell division topological specificity factor (Burkholderia cenocepacia (strain HI2424)).